The following is a 923-amino-acid chain: Protocadherin gamma-B5 (923 aa).

The first 30 residues, 1–30 (MGRGTGELGRAERLPVLFLFLLSLFCPALC), serve as a signal peptide directing secretion. Cadherin domains are found at residues 31-133 (EQIR…TPKF), 134-242 (TQNS…PPVF), 243-343 (NRDV…SPEV), 344-448 (TFHS…APVF), 449-558 (HQAS…APRV), and 566-671 (DGSA…LPDI). Residues 31-687 (EQIRYRIPEE…SDPQAELQFY (657 aa)) are Extracellular-facing. Residues N415 and N541 are each glycosylated (N-linked (GlcNAc...) asparagine). The chain crosses the membrane as a helical span at residues 688–708 (LVVALALISVLFLLAVILAIA). Over 709-923 (LRLRRSSSPA…KKKSGKKEKK (215 aa)) the chain is Cytoplasmic. 2 disordered regions span residues 794 to 832 (TSHPELQAPPNTDWRFSQAQRPGTSGSQNGDDTGTWPNN) and 893 to 923 (ATLTNAAGKRDGKAPAGGNGNKKKSGKKEKK). The segment covering 807–832 (WRFSQAQRPGTSGSQNGDDTGTWPNN) has biased composition (polar residues). Basic residues predominate over residues 913–923 (NKKKSGKKEKK).

The protein localises to the cell membrane. Its function is as follows. Potential calcium-dependent cell-adhesion protein. May be involved in the establishment and maintenance of specific neuronal connections in the brain. This Pan troglodytes (Chimpanzee) protein is Protocadherin gamma-B5 (PCDHGB5).